The primary structure comprises 406 residues: Probable G-protein coupled receptor tkr-1 (406 aa).

Topologically, residues 1 to 47 (MNQEFLIQLGERACKNAENLTLPAELEGIFFCAPSSRESLATQVFVA) are extracellular. The helical transmembrane segment at 48 to 68 (IAFVLLMATAIIGNSVVMWII) threads the bilayer. The Cytoplasmic portion of the chain corresponds to 69 to 76 (YQHKVMHY). Residues 77 to 97 (GFNYFLFNMAFADLLIALFNV) traverse the membrane as a helical segment. At 98-115 (GTSWTYNLYYDWWYGDLC) the chain is on the extracellular side. The helical transmembrane segment at 116–136 (TLTSFFGIAPTTVSVCSMMAL) threads the bilayer. At 137–158 (SWDRCQAVVNPLQKRPLSRKRS) the chain is on the cytoplasmic side. Residues 159-179 (VIAILIIWVVSTVTALPFAIA) traverse the membrane as a helical segment. Topologically, residues 180–204 (ASVNSLYTYDVVTSTVSKAHVCSAP) are extracellular. The helical transmembrane segment at 205–225 (VNTFFEKVLFGIQYALPIIIL) threads the bilayer. Topologically, residues 226–261 (GSTFTRIAVAFRATNEATDSSLKNNHTRAKSKAVKM) are cytoplasmic. The chain crosses the membrane as a helical span at residues 262-282 (LFLMVVAFVVCWLPYHIYHAF). At 283 to 297 (ALEEFFDAARGKYAY) the chain is on the extracellular side. The helical transmembrane segment at 298-318 (LLIYWIAMSSCAYNPIIYCFA) threads the bilayer. The Cytoplasmic portion of the chain corresponds to 319-406 (NERFRIGFRY…KVHLLSCHER (88 aa)).

It belongs to the G-protein coupled receptor 1 family.

It is found in the cell membrane. Not known. Putative receptor. This is Probable G-protein coupled receptor tkr-1 (tkr-1) from Caenorhabditis elegans.